The primary structure comprises 147 residues: Peptide methionine sulfoxide reductase MsrA (147 aa).

Cysteine 10 is an active-site residue.

This sequence belongs to the MsrA Met sulfoxide reductase family.

The catalysed reaction is L-methionyl-[protein] + [thioredoxin]-disulfide + H2O = L-methionyl-(S)-S-oxide-[protein] + [thioredoxin]-dithiol. The enzyme catalyses [thioredoxin]-disulfide + L-methionine + H2O = L-methionine (S)-S-oxide + [thioredoxin]-dithiol. Its function is as follows. Has an important function as a repair enzyme for proteins that have been inactivated by oxidation. Catalyzes the reversible oxidation-reduction of methionine sulfoxide in proteins to methionine. The protein is Peptide methionine sulfoxide reductase MsrA of Pelagibacter ubique (strain HTCC1062).